Reading from the N-terminus, the 455-residue chain is Nuclear receptor subfamily 6 group A member 1-B (455 aa).

The nuclear receptor DNA-binding region spans 38–113 (ERWCLICGDR…MGMNRKAIRE (76 aa)). NR C4-type zinc fingers lie at residues 41 to 61 (CLIC…CEGC) and 77 to 96 (CNRD…CQYC). Residues 145 to 173 (EGSDLSDSWSHGYSNHSSPGNSLSEGGQS) form a disordered region. Residues 149-165 (LSDSWSHGYSNHSSPGN) are compositionally biased toward polar residues. The 232-residue stretch at 215–446 (QTHTLTGQIL…YSCTTNQNPW (232 aa)) folds into the NR LBD domain.

This sequence belongs to the nuclear hormone receptor family. NR6 subfamily. As to quaternary structure, homodimer.

It localises to the nucleus. In terms of biological role, probable orphan nuclear receptor. Binds to a response element containing repeats of the motif 5'-AGGTCA-3'. This chain is Nuclear receptor subfamily 6 group A member 1-B, found in Danio rerio (Zebrafish).